A 221-amino-acid polypeptide reads, in one-letter code: Deoxyribose-phosphate aldolase (221 aa).

Asp-89 acts as the Proton donor/acceptor in catalysis. The active-site Schiff-base intermediate with acetaldehyde is the Lys-151. Lys-180 serves as the catalytic Proton donor/acceptor.

It belongs to the DeoC/FbaB aldolase family. DeoC type 1 subfamily.

The protein resides in the cytoplasm. It carries out the reaction 2-deoxy-D-ribose 5-phosphate = D-glyceraldehyde 3-phosphate + acetaldehyde. It participates in carbohydrate degradation; 2-deoxy-D-ribose 1-phosphate degradation; D-glyceraldehyde 3-phosphate and acetaldehyde from 2-deoxy-alpha-D-ribose 1-phosphate: step 2/2. Its function is as follows. Catalyzes a reversible aldol reaction between acetaldehyde and D-glyceraldehyde 3-phosphate to generate 2-deoxy-D-ribose 5-phosphate. This is Deoxyribose-phosphate aldolase from Mesomycoplasma hyopneumoniae (strain 232) (Mycoplasma hyopneumoniae).